The sequence spans 426 residues: Endoglucanase (426 aa).

The first 19 residues, methionine 1–glycine 19, serve as a signal peptide directing secretion. A lipid anchor (N-palmitoyl cysteine) is attached at cysteine 20. Cysteine 20 carries the S-diacylglycerol cysteine lipid modification. The propeptide occupies cysteine 20–alanine 45. The active-site Proton donor is the glutamate 249. Glutamate 361 acts as the Nucleophile in catalysis.

This sequence belongs to the glycosyl hydrolase 5 (cellulase A) family.

The protein resides in the cell membrane. The enzyme catalyses Endohydrolysis of (1-&gt;4)-beta-D-glucosidic linkages in cellulose, lichenin and cereal beta-D-glucans.. The polypeptide is Endoglucanase (egl) (Ralstonia solanacearum (Pseudomonas solanacearum)).